Consider the following 565-residue polypeptide: Phosphomethylpyrimidine synthase (565 aa).

Substrate contacts are provided by residues N203, M232, Y261, H297, 317 to 319 (SRG), 358 to 361 (DGLR), and E397. H401 contacts Zn(2+). Residue Y424 participates in substrate binding. H465 provides a ligand contact to Zn(2+). C541, C544, and C549 together coordinate [4Fe-4S] cluster.

Belongs to the ThiC family. [4Fe-4S] cluster serves as cofactor.

It carries out the reaction 5-amino-1-(5-phospho-beta-D-ribosyl)imidazole + S-adenosyl-L-methionine = 4-amino-2-methyl-5-(phosphooxymethyl)pyrimidine + CO + 5'-deoxyadenosine + formate + L-methionine + 3 H(+). The protein operates within cofactor biosynthesis; thiamine diphosphate biosynthesis. Its function is as follows. Catalyzes the synthesis of the hydroxymethylpyrimidine phosphate (HMP-P) moiety of thiamine from aminoimidazole ribotide (AIR) in a radical S-adenosyl-L-methionine (SAM)-dependent reaction. In Bacteroides thetaiotaomicron (strain ATCC 29148 / DSM 2079 / JCM 5827 / CCUG 10774 / NCTC 10582 / VPI-5482 / E50), this protein is Phosphomethylpyrimidine synthase.